The chain runs to 491 residues: Interferon regulatory factor 3 (491 aa).

The IRF tryptophan pentad repeat DNA-binding region spans 12–116 (KLRFGPWLLN…DPHKVYAVAS (105 aa)).

It belongs to the IRF family. Widely expressed with higher expression in lung, spleen and intestine.

The protein localises to the cytoplasm. It is found in the nucleus. Key transcriptional regulator of type I interferon (IFN)-dependent immune responses which plays a critical role in the innate immune response against DNA and RNA viruses. Regulates the transcription of type I IFN genes (IFN-alpha and IFN-beta) and IFN-stimulated genes (ISG) by binding to an interferon-stimulated response element (ISRE) in their promoters. May activate transcription by complex formation with other transcriptional factors, possibly members of the STAT family. Binds specifically to the IFN-stimulated response element (ISRE) but not to the IRF-1 binding site PRD-I. The sequence is that of Interferon regulatory factor 3 (IRF3) from Gallus gallus (Chicken).